The primary structure comprises 327 residues: GTPase Obg (327 aa).

The region spanning 2–160 (HILKDSLSIT…LNLRLELSLI (159 aa)) is the Obg domain. The region spanning 161–326 (ADIGLVGFPN…LVSELFALSR (166 aa)) is the OBG-type G domain. GTP contacts are provided by residues 167-174 (GFPNAGKS), 192-196 (FTTRF), 213-216 (DVPG), 280-283 (NKLD), and 307-309 (SIY). Mg(2+) contacts are provided by Ser-174 and Thr-194.

The protein belongs to the TRAFAC class OBG-HflX-like GTPase superfamily. OBG GTPase family. As to quaternary structure, monomer. Mg(2+) serves as cofactor.

The protein resides in the cytoplasm. Functionally, an essential GTPase which binds GTP, GDP and possibly (p)ppGpp with moderate affinity, with high nucleotide exchange rates and a fairly low GTP hydrolysis rate. Plays a role in control of the cell cycle, stress response, ribosome biogenesis and in those bacteria that undergo differentiation, in morphogenesis control. In Borrelia hermsii (strain HS1 / DAH), this protein is GTPase Obg.